Reading from the N-terminus, the 293-residue chain is Glutamyl-Q tRNA(Asp) synthetase (293 aa).

L-glutamate-binding positions include 9-13 (RFAPS) and Glu45. A 'HIGH' region motif is present at residues 12-22 (PSPSGSLHFGS). Residues Cys101, Cys103, Tyr115, and Cys119 each contribute to the Zn(2+) site. Residues Tyr172 and Arg190 each contribute to the L-glutamate site. Residues 228–232 (KLSKQ) carry the 'KMSKS' region motif. Position 231 (Lys231) interacts with ATP.

Belongs to the class-I aminoacyl-tRNA synthetase family. GluQ subfamily. Zn(2+) serves as cofactor.

Functionally, catalyzes the tRNA-independent activation of glutamate in presence of ATP and the subsequent transfer of glutamate onto a tRNA(Asp). Glutamate is transferred on the 2-amino-5-(4,5-dihydroxy-2-cyclopenten-1-yl) moiety of the queuosine in the wobble position of the QUC anticodon. This chain is Glutamyl-Q tRNA(Asp) synthetase, found in Shewanella frigidimarina (strain NCIMB 400).